We begin with the raw amino-acid sequence, 606 residues long: EPM2A-interacting protein 1 (606 aa).

Ser147 carries the post-translational modification Phosphoserine.

In terms of assembly, interacts with EPM2A.

The protein resides in the endoplasmic reticulum. In Mus musculus (Mouse), this protein is EPM2A-interacting protein 1 (Epm2aip1).